The following is a 321-amino-acid chain: D-alanine--D-alanine ligase (321 aa).

The region spanning 121–315 (RSCFLKNNIN…FTNLIEEIIK (195 aa)) is the ATP-grasp domain. Residue 148 to 199 (MKRPYVIKPLKQGSSIGVEVIFEEDDFHFIDYDFPYGEDIIIEQYIQGQELQ) participates in ATP binding. Glu268, Glu282, and Asn284 together coordinate Mg(2+).

It belongs to the D-alanine--D-alanine ligase family. Mg(2+) is required as a cofactor. The cofactor is Mn(2+).

It localises to the cytoplasm. It carries out the reaction 2 D-alanine + ATP = D-alanyl-D-alanine + ADP + phosphate + H(+). It participates in cell wall biogenesis; peptidoglycan biosynthesis. Its function is as follows. Cell wall formation. This chain is D-alanine--D-alanine ligase, found in Rickettsia typhi (strain ATCC VR-144 / Wilmington).